A 346-amino-acid chain; its full sequence is Probable dual-specificity RNA methyltransferase RlmN (346 aa).

Glu-92 acts as the Proton acceptor in catalysis. One can recognise a Radical SAM core domain in the interval 98–332 (TDQRLTVCVS…VSLRASRGLD (235 aa)). Cys-105 and Cys-337 form a disulfide bridge. 3 residues coordinate [4Fe-4S] cluster: Cys-112, Cys-116, and Cys-119. Residues 159 to 160 (GE), Ser-189, 218 to 220 (SLH), and Asn-294 each bind S-adenosyl-L-methionine. Cys-337 acts as the S-methylcysteine intermediate in catalysis.

This sequence belongs to the radical SAM superfamily. RlmN family. It depends on [4Fe-4S] cluster as a cofactor.

It is found in the cytoplasm. The enzyme catalyses adenosine(2503) in 23S rRNA + 2 reduced [2Fe-2S]-[ferredoxin] + 2 S-adenosyl-L-methionine = 2-methyladenosine(2503) in 23S rRNA + 5'-deoxyadenosine + L-methionine + 2 oxidized [2Fe-2S]-[ferredoxin] + S-adenosyl-L-homocysteine. It carries out the reaction adenosine(37) in tRNA + 2 reduced [2Fe-2S]-[ferredoxin] + 2 S-adenosyl-L-methionine = 2-methyladenosine(37) in tRNA + 5'-deoxyadenosine + L-methionine + 2 oxidized [2Fe-2S]-[ferredoxin] + S-adenosyl-L-homocysteine. Functionally, specifically methylates position 2 of adenine 2503 in 23S rRNA and position 2 of adenine 37 in tRNAs. This is Probable dual-specificity RNA methyltransferase RlmN from Synechococcus sp. (strain CC9311).